We begin with the raw amino-acid sequence, 691 residues long: Calcium-binding and coiled-coil domain-containing protein 1 (691 aa).

Positions 1–30 (MEESPLSRAPSRGGVNFLNVARTYIPNTKV) are p300 KIX-binding. An N-terminal AD (CTNNB1 binding site) region spans residues 1–190 (MEESPLSRAP…VQELERALAT (190 aa)). At Ser-4 the chain carries Phosphoserine. The interaction with GATA1 stretch occupies residues 45 to 125 (SDWIGIFKVE…FQFREPRPMD (81 aa)). Coiled coils occupy residues 145-205 (KATV…YKGI), 232-339 (ELED…AELE), and 417-514 (QSVE…ADEK). The tract at residues 501–691 (RKLEARLEKV…FSTQDPFTFE (191 aa)) is C-terminal AD (CTNNB1 binding site); interaction with CCAR1. Residues 514-606 (KWNEDATTED…SEAEDEKSVL (93 aa)) form a disordered region. The UBZ1-type zinc-finger motif lies at 653 to 679 (WKECPICKERFPAESDKDALEDHMDGH). 4 residues coordinate Zn(2+): Cys-656, Cys-659, His-675, and His-679.

The protein belongs to the CALCOCO family. Part of a calphoglin complex consisting of CALCOCO1, PPA1 and PGM. Interacts with the bHLH-PAS domains of GRIP1, AHR and ARNT. Interacts with CTNNB1 via both its N- and C-terminal regions. Interacts with EP300. Interacts with CCAR1 (via N-terminus) and GATA1.

It localises to the cytoplasm. The protein localises to the nucleus. Its function is as follows. Functions as a coactivator for aryl hydrocarbon and nuclear receptors (NR). Recruited to promoters through its contact with the N-terminal basic helix-loop-helix-Per-Arnt-Sim (PAS) domain of transcription factors or coactivators, such as NCOA2. During ER-activation acts synergistically in combination with other NCOA2-binding proteins, such as EP300, CREBBP and CARM1. Involved in the transcriptional activation of target genes in the Wnt/CTNNB1 pathway. Functions as a secondary coactivator in LEF1-mediated transcriptional activation via its interaction with CTNNB1. Coactivator function for nuclear receptors and LEF1/CTNNB1 involves differential utilization of two different activation regions. In association with CCAR1 enhances GATA1- and MED1-mediated transcriptional activation from the gamma-globin promoter during erythroid differentiation of K562 erythroleukemia cells. Seems to enhance inorganic pyrophosphatase thus activating phosphogluomutase (PMG). Probably functions as a component of the calphoglin complex, which is involved in linking cellular metabolism (phosphate and glucose metabolism) with other core functions including protein synthesis and degradation, calcium signaling and cell growth. This Homo sapiens (Human) protein is Calcium-binding and coiled-coil domain-containing protein 1 (CALCOCO1).